Here is a 157-residue protein sequence, read N- to C-terminus: Protein Smg homolog (157 aa).

Belongs to the Smg family.

In Stenotrophomonas maltophilia (strain R551-3), this protein is Protein Smg homolog.